We begin with the raw amino-acid sequence, 323 residues long: MPGFNYGGDQDEVYTPYRRVLVTGATGLLGRAVYKEFKNNDWDALGCGYNRARPFFLKCNLLDEDAVRGVIQSFQPHVIVHCAAERRPDVVERHTEAAMNLNVHACATLAKEAGGSFLIYISTDYVFDGRNPPYGENDAPNPLNLYGKSKLEGEREILRHCPGAAVLRVPILFGEVEKVEESAVTVLFERVQEGAESCTIDHCQQRFPTYTNDVARVCRNMAERALQDQSLRGIFHYSAKEQMTKYEMTCAIADAFNLPSSHLIPMTEQPAGAGAQRPQNAQLECSRLELLGLSVESTPFKNAIRDSLWPFQHDKRWRQTVFH.

Residues 26–29 (TGLL), 49–51 (YNR), 60–61 (NL), Cys82, Arg86, Tyr146, and Leu172 each bind NADP(+). Residues 308–323 (LWPFQHDKRWRQTVFH) form a required for interaction with MAT2A region.

This sequence belongs to the dTDP-4-dehydrorhamnose reductase family. MAT2B subfamily. Heterotrimer; composed of a catalytic mat2a homodimer that binds one regulatory mat2b chain. Heterohexamer; composed of a central, catalytic mat2a homotetramer flanked on either side by a regulatory mat2b chain. NADP binding increases the affinity for mat2a.

It functions in the pathway amino-acid biosynthesis; S-adenosyl-L-methionine biosynthesis; S-adenosyl-L-methionine from L-methionine: step 1/1. Functionally, regulatory subunit of S-adenosylmethionine synthetase 2, an enzyme that catalyzes the formation of S-adenosylmethionine from methionine and ATP. Regulates MAT2A catalytic activity by changing its kinetic properties, increasing its affinity for L-methionine. Can bind NADP (in vitro). In Danio rerio (Zebrafish), this protein is Methionine adenosyltransferase 2 subunit beta (mat2b).